The sequence spans 61 residues: Large ribosomal subunit protein uL30 (61 aa).

It belongs to the universal ribosomal protein uL30 family. In terms of assembly, part of the 50S ribosomal subunit.

In Chlorobium luteolum (strain DSM 273 / BCRC 81028 / 2530) (Pelodictyon luteolum), this protein is Large ribosomal subunit protein uL30.